Here is a 192-residue protein sequence, read N- to C-terminus: Xanthine phosphoribosyltransferase (192 aa).

Positions 20 and 27 each coordinate xanthine. 128 to 132 (ADGEA) provides a ligand contact to 5-phospho-alpha-D-ribose 1-diphosphate. Lys-156 provides a ligand contact to xanthine.

This sequence belongs to the purine/pyrimidine phosphoribosyltransferase family. Xpt subfamily. As to quaternary structure, homodimer.

Its subcellular location is the cytoplasm. The enzyme catalyses XMP + diphosphate = xanthine + 5-phospho-alpha-D-ribose 1-diphosphate. It functions in the pathway purine metabolism; XMP biosynthesis via salvage pathway; XMP from xanthine: step 1/1. Its function is as follows. Converts the preformed base xanthine, a product of nucleic acid breakdown, to xanthosine 5'-monophosphate (XMP), so it can be reused for RNA or DNA synthesis. The sequence is that of Xanthine phosphoribosyltransferase from Agathobacter rectalis (strain ATCC 33656 / DSM 3377 / JCM 17463 / KCTC 5835 / VPI 0990) (Eubacterium rectale).